A 702-amino-acid polypeptide reads, in one-letter code: 1,4-alpha-glucan-branching enzyme (702 aa).

N-acetylalanine is present on Ala2. Substrate contacts are provided by residues Asn62–Glu63 and Trp91–Pro93. Trp107 contributes to the (1,4-alpha-D-glucosyl)n binding site. Glu118–Lys121 contacts substrate. A (1,4-alpha-D-glucosyl)n-binding site is contributed by Lys143. Residue Tyr173 is modified to Phosphotyrosine. A substrate-binding site is contributed by Glu333 to Arg336. Catalysis depends on Asp357, which acts as the Nucleophile. Glu412 acts as the Proton donor in catalysis.

It belongs to the glycosyl hydrolase 13 family. GlgB subfamily. As to quaternary structure, monomer.

It catalyses the reaction Transfers a segment of a (1-&gt;4)-alpha-D-glucan chain to a primary hydroxy group in a similar glucan chain.. It participates in glycan biosynthesis; glycogen biosynthesis. Its function is as follows. Glycogen-branching enzyme participates in the glycogen biosynthetic process along with glycogenin and glycogen synthase. Generates alpha-1,6-glucosidic branches from alpha-1,4-linked glucose chains, to increase solubility of the glycogen polymer. This is 1,4-alpha-glucan-branching enzyme (Gbe1) from Mus musculus (Mouse).